The following is a 348-amino-acid chain: Haptoglobin-related protein (348 aa).

A signal peptide (not cleaved) is located at residues 1–18 (MSDLGAVISLLLWGRQLF). In terms of domain architecture, Sushi spans 34–87 (FPKPPEIANGYVEHLFRYQCKNYYRLRTEGDGVYTLNDKKQWINKAVGDKLPEC). Residues 104–346 (ILGGHLDAKG…IQHWVQKTIA (243 aa)) enclose the Peptidase S1 domain. 2 disulfides stabilise this stretch: C251–C282 and C293–C323.

It belongs to the peptidase S1 family. In terms of tissue distribution, in adult liver the amount of HPR mRNA is at the lower limit of detection, therefore the extent of its expression is at most less than 1000-fold that of the HP1F gene. No HPR mRNA can be detected in fetal liver. Expressed in Hep-G2 and leukemia MOLT-4 cell lines.

It is found in the secreted. In terms of biological role, primate-specific plasma protein associated with apolipoprotein L-I (apoL-I)-containing high-density lipoprotein (HDL). This HDL particle, termed trypanosome lytic factor-1 (TLF-1), mediates human innate immune protection against many species of African trypanosomes. Binds hemoglobin with high affinity and may contribute to the clearance of cell-free hemoglobin to allow hepatic recycling of heme iron. This is Haptoglobin-related protein (HPR) from Homo sapiens (Human).